Consider the following 186-residue polypeptide: Elongation factor P (186 aa).

It belongs to the elongation factor P family.

Its subcellular location is the cytoplasm. The protein operates within protein biosynthesis; polypeptide chain elongation. Its function is as follows. Involved in peptide bond synthesis. Stimulates efficient translation and peptide-bond synthesis on native or reconstituted 70S ribosomes in vitro. Probably functions indirectly by altering the affinity of the ribosome for aminoacyl-tRNA, thus increasing their reactivity as acceptors for peptidyl transferase. The protein is Elongation factor P of Cupriavidus pinatubonensis (strain JMP 134 / LMG 1197) (Cupriavidus necator (strain JMP 134)).